We begin with the raw amino-acid sequence, 271 residues long: Bifunctional protein FolD (271 aa).

Residues Gly-154 to Ser-156, Ser-181, and Ile-222 contribute to the NADP(+) site.

Belongs to the tetrahydrofolate dehydrogenase/cyclohydrolase family. As to quaternary structure, homodimer.

The catalysed reaction is (6R)-5,10-methylene-5,6,7,8-tetrahydrofolate + NADP(+) = (6R)-5,10-methenyltetrahydrofolate + NADPH. It carries out the reaction (6R)-5,10-methenyltetrahydrofolate + H2O = (6R)-10-formyltetrahydrofolate + H(+). It participates in one-carbon metabolism; tetrahydrofolate interconversion. Functionally, catalyzes the oxidation of 5,10-methylenetetrahydrofolate to 5,10-methenyltetrahydrofolate and then the hydrolysis of 5,10-methenyltetrahydrofolate to 10-formyltetrahydrofolate. The protein is Bifunctional protein FolD of Thermotoga maritima (strain ATCC 43589 / DSM 3109 / JCM 10099 / NBRC 100826 / MSB8).